The primary structure comprises 378 residues: Cytochrome b (378 aa).

Helical transmembrane passes span 32-52 (FGSLLGLCLVIQILTGLFLAM), 76-97 (WLIRYMHANGASMFFICLFLHV), 112-132 (WNIGVILLFAVMATAFMGYVL), and 177-197 (FFAFHFILPFIVAALVMVHLL). Positions 82 and 96 each coordinate heme b. Residues His181 and His195 each coordinate heme b. His200 contacts a ubiquinone. 4 helical membrane passes run 225-245 (IKDALGIFLLLLLFMTLVLFF), 287-307 (LGGVLALIFSILILMMFPILH), 319-339 (LSQCLFWILVADLFTLTWIGG), and 346-366 (FITIGQVASIIYFVIILFALP).

Belongs to the cytochrome b family. As to quaternary structure, the cytochrome bc1 complex contains 11 subunits: 3 respiratory subunits (MT-CYB, CYC1 and UQCRFS1), 2 core proteins (UQCRC1 and UQCRC2) and 6 low-molecular weight proteins (UQCRH/QCR6, UQCRB/QCR7, UQCRQ/QCR8, UQCR10/QCR9, UQCR11/QCR10 and a cleavage product of UQCRFS1). This cytochrome bc1 complex then forms a dimer. Heme b is required as a cofactor.

The protein resides in the mitochondrion inner membrane. Its function is as follows. Component of the ubiquinol-cytochrome c reductase complex (complex III or cytochrome b-c1 complex) that is part of the mitochondrial respiratory chain. The b-c1 complex mediates electron transfer from ubiquinol to cytochrome c. Contributes to the generation of a proton gradient across the mitochondrial membrane that is then used for ATP synthesis. This chain is Cytochrome b (MT-CYB), found in Sciurus aberti (Abert's squirrel).